The following is a 211-amino-acid chain: MAKVLYITAHPHDETVSYSMATAKAFIESYKEANPSDEVVHIDLYKENIPHIDADVFAGWGKLQSGAGFDTLSAEEQAKVARLNELSDQFVSADKYVFVSPLWNFSFPPVLKAYIDSVAVAGKTFKYTEQGPVGLLTDKKALHIQARGGYYTEGPAAELEAGHRYLGTIASFFGIPSFEGLIVEGHNAEPAKAEQIKADAIERAKALGKTF.

17 to 19 (SYS) lines the FMN pocket.

It belongs to the azoreductase type 1 family. Homodimer. The cofactor is FMN.

The enzyme catalyses 2 a quinone + NADH + H(+) = 2 a 1,4-benzosemiquinone + NAD(+). It carries out the reaction N,N-dimethyl-1,4-phenylenediamine + anthranilate + 2 NAD(+) = 2-(4-dimethylaminophenyl)diazenylbenzoate + 2 NADH + 2 H(+). In terms of biological role, quinone reductase that provides resistance to thiol-specific stress caused by electrophilic quinones. Its function is as follows. Also exhibits azoreductase activity. Catalyzes the reductive cleavage of the azo bond in aromatic azo compounds to the corresponding amines. The polypeptide is FMN-dependent NADH:quinone oxidoreductase (Bacillus pumilus (strain SAFR-032)).